The chain runs to 59 residues: Putative movement protein p6.6 (59 aa).

The helical transmembrane segment at 13–35 (RVGPLLVLCLLLLLILFSRSWNV) threads the bilayer.

It localises to the membrane. Cell-to-cell movement. In Panicum mosaic virus (strain United States/Kansas 109S) (PMV), this protein is Putative movement protein p6.6.